The primary structure comprises 218 residues: Large ribosomal subunit protein uL3 (218 aa).

The segment at 124–162 (KRHGFSRGPMTHGSKNHREPGSTGAGTTPGRIYPGKRMA) is disordered.

It belongs to the universal ribosomal protein uL3 family. In terms of assembly, part of the 50S ribosomal subunit. Forms a cluster with proteins L14 and L19.

Its function is as follows. One of the primary rRNA binding proteins, it binds directly near the 3'-end of the 23S rRNA, where it nucleates assembly of the 50S subunit. The chain is Large ribosomal subunit protein uL3 from Synechococcus sp. (strain CC9605).